The sequence spans 397 residues: Putative teichuronic acid biosynthesis glycosyltransferase TuaH (397 aa).

It belongs to the glycosyltransferase group 1 family.

The protein operates within cell wall biogenesis; teichuronic acid biosynthesis. The chain is Putative teichuronic acid biosynthesis glycosyltransferase TuaH (tuaH) from Bacillus subtilis (strain 168).